The primary structure comprises 229 residues: Uracil-DNA glycosylase (229 aa).

Asp70 functions as the Proton acceptor in the catalytic mechanism.

This sequence belongs to the uracil-DNA glycosylase (UDG) superfamily. UNG family.

It is found in the cytoplasm. The enzyme catalyses Hydrolyzes single-stranded DNA or mismatched double-stranded DNA and polynucleotides, releasing free uracil.. In terms of biological role, excises uracil residues from the DNA which can arise as a result of misincorporation of dUMP residues by DNA polymerase or due to deamination of cytosine. The chain is Uracil-DNA glycosylase from Chlamydia trachomatis serovar A (strain ATCC VR-571B / DSM 19440 / HAR-13).